Here is an 825-residue protein sequence, read N- to C-terminus: NT-3 growth factor receptor (825 aa).

The first 31 residues, 1 to 31 (MDVSLCPAKCSFWRIFLLGSVWLDYVGSVLA), serve as a signal peptide directing secretion. 2 disulfide bridges follow: Cys-32/Cys-38 and Cys-36/Cys-45. At 32–429 (CPANCVCSKT…TVTHKPEEDT (398 aa)) the chain is on the extracellular side. N-linked (GlcNAc...) asparagine glycans are attached at residues Asn-68, Asn-72, and Asn-79. 2 LRR repeats span residues 104–125 (GLQKLTIKNSGLRNIQPRAFAK) and 128–149 (HLRYINLSSNRLTTLSWQLFQT). 2 N-linked (GlcNAc...) asparagine glycosylation sites follow: Asn-133 and Asn-163. The 50-residue stretch at 160–209 (NFFNCSCDIRWMQLWQEQGEARLDSQSLYCISADGSQLPLFRMNISQCDL) folds into the LRRCT domain. 2 disulfides stabilise this stretch: Cys-164–Cys-189 and Cys-166–Cys-207. N-linked (GlcNAc...) asparagine glycosylation is found at Asn-203, Asn-218, Asn-232, Asn-259, Asn-267, Asn-272, and Asn-294. Ig-like C2-type domains are found at residues 210-300 (PEIS…VALT) and 309-382 (SLVE…IAKN). A disulfide bridge connects residues Cys-231 and Cys-284. An intrachain disulfide couples Cys-320 to Cys-362. Residues Asn-375 and Asn-388 are each glycosylated (N-linked (GlcNAc...) asparagine). Residues 430–453 (FGVSIAVGLAAFACVLLVVLFIMI) form a helical membrane-spanning segment. Over 454-825 (NKYGRRSKFG…ATPIYLDILG (372 aa)) the chain is Cytoplasmic. Ser-493 bears the Phosphoserine mark. At Tyr-516 the chain carries Phosphotyrosine. Residues 538–825 (IVLKRELGEG…ATPIYLDILG (288 aa)) enclose the Protein kinase domain. ATP contacts are provided by residues 544 to 552 (LGEGAFGKV) and Lys-572. Asp-679 serves as the catalytic Proton acceptor. Residues Tyr-705, Tyr-709, and Tyr-710 each carry the phosphotyrosine; by autocatalysis modification.

The protein belongs to the protein kinase superfamily. Tyr protein kinase family. Insulin receptor subfamily. As to quaternary structure, exists in a dynamic equilibrium between monomeric (low affinity) and dimeric (high affinity) structures. Binds SH2B2. Interacts with SQSTM1 and KIDINS220. Interacts with PTPRS. Interacts with MAPK8IP3/JIP3. In terms of processing, ligand-mediated auto-phosphorylation. Isoform 2 expression is restricted to specific areas in adult brain. Isoform 3 transcripts are readily detected early during embryogenesis and are expressed predominantly in adult brain and gonads.

Its subcellular location is the membrane. The catalysed reaction is L-tyrosyl-[protein] + ATP = O-phospho-L-tyrosyl-[protein] + ADP + H(+). In terms of biological role, receptor tyrosine kinase involved in nervous system and probably heart development. Upon binding of its ligand NTF3/neurotrophin-3, NTRK3 autophosphorylates and activates different signaling pathways, including the phosphatidylinositol 3-kinase/AKT and the MAPK pathways, that control cell survival and differentiation. This chain is NT-3 growth factor receptor (Ntrk3), found in Mus musculus (Mouse).